The following is a 357-amino-acid chain: Histidinol-phosphate aminotransferase 1 (357 aa).

Position 210 is an N6-(pyridoxal phosphate)lysine (Lys-210).

This sequence belongs to the class-II pyridoxal-phosphate-dependent aminotransferase family. Histidinol-phosphate aminotransferase subfamily. As to quaternary structure, homodimer. It depends on pyridoxal 5'-phosphate as a cofactor.

It catalyses the reaction L-histidinol phosphate + 2-oxoglutarate = 3-(imidazol-4-yl)-2-oxopropyl phosphate + L-glutamate. The protein operates within amino-acid biosynthesis; L-histidine biosynthesis; L-histidine from 5-phospho-alpha-D-ribose 1-diphosphate: step 7/9. The polypeptide is Histidinol-phosphate aminotransferase 1 (Methylococcus capsulatus (strain ATCC 33009 / NCIMB 11132 / Bath)).